Reading from the N-terminus, the 102-residue chain is Small ribosomal subunit protein uS10 (102 aa).

This sequence belongs to the universal ribosomal protein uS10 family. In terms of assembly, part of the 30S ribosomal subunit.

Its function is as follows. Involved in the binding of tRNA to the ribosomes. The sequence is that of Small ribosomal subunit protein uS10 from Thermobifida fusca (strain YX).